The following is a 100-amino-acid chain: Mini zinc finger protein 2 (100 aa).

A disordered region spans residues 1 to 26 (MRKRQVVLRRASPEEPSRSSSTASSL). The segment at 33–83 (YGECQKNHAAAVGGYAVDGCREFMASRGEEGTVAALTCAACGCHRSFHRRE) adopts a ZF-HD dimerization-type; degenerate zinc-finger fold.

As to quaternary structure, homo- and heterodimers. Interacts with ZHD1, ZHD3, ZHD5, ZHD8, ZHD10 and ZHD13. In terms of tissue distribution, mostly expressed in stems, flowers and siliques, and, to a lower extent, in inflorescence.

The protein localises to the cytoplasm. Its function is as follows. Inhibits zinc finger homeodomain (ZHD) transcription factors by interacting with them to prevent both their nuclear localization and their DNA-binding properties. Involved in integrating signals from multiple hormones by regulating the expression of specific genes. The sequence is that of Mini zinc finger protein 2 (MIF2) from Arabidopsis thaliana (Mouse-ear cress).